The chain runs to 634 residues: Kelch-like protein 22 (634 aa).

N-acetylalanine is present on Ala2. In terms of domain architecture, BTB spans 50–117 (FDVVLVVEGR…IYTSELELSL (68 aa)). 6 Kelch repeats span residues 299 to 349 (CVVG…VLNN), 350 to 399 (FVYL…VVGR), 400 to 446 (YIYA…TLEG), 448 to 493 (MYIT…TLLN), 494 to 544 (KLYV…VLDN), and 545 to 593 (RIYV…VLTL). Thr463 is subject to Phosphothreonine. Residue Tyr466 is modified to Phosphotyrosine. Thr475 carries the phosphothreonine modification. The interval 600–634 (EPPRGTPDRSQADPDFASEVMSVSDWEEFDNSSED) is disordered. Thr605 is modified (phosphothreonine). The span at 624–634 (DWEEFDNSSED) shows a compositional bias: acidic residues.

In terms of assembly, component of the BCR(KLHL22) E3 ubiquitin ligase complex, at least composed of CUL3, KLHL22 and RBX1. Interacts with PLK1. Interacts with DEPDC5 (via DEP domain); the interaction depends on amino acid availability. Interacts with YWHAE; required for the nuclear localization of KLHL22 upon amino acid starvation.

Its subcellular location is the cytoplasm. The protein localises to the cytosol. It is found in the cytoskeleton. It localises to the microtubule organizing center. The protein resides in the centrosome. Its subcellular location is the spindle. The protein localises to the nucleus. It is found in the lysosome. The protein operates within protein modification; protein ubiquitination. Substrate-specific adapter of a BCR (BTB-CUL3-RBX1) E3 ubiquitin ligase complex required for chromosome alignment and localization of PLK1 at kinetochores. The BCR(KLHL22) ubiquitin ligase complex mediates monoubiquitination of PLK1, leading to PLK1 dissociation from phosphoreceptor proteins and subsequent removal from kinetochores, allowing silencing of the spindle assembly checkpoint (SAC) and chromosome segregation. Monoubiquitination of PLK1 does not lead to PLK1 degradation. The BCR(KLHL22) ubiquitin ligase complex is also responsible for the amino acid-stimulated 'Lys-48' polyubiquitination and proteasomal degradation of DEPDC5. Through the degradation of DEPDC5, releases the GATOR1 complex-mediated inhibition of the TORC1 pathway. It is therefore an amino acid-dependent activator within the amino acid-sensing branch of the TORC1 pathway, indirectly regulating different cellular processes including cell growth and autophagy. This Homo sapiens (Human) protein is Kelch-like protein 22.